Reading from the N-terminus, the 175-residue chain is Interleukin-10 (175 aa).

A signal peptide spans 1–21 (MQTCCQALLLLLAACTLPAHC). Intrachain disulfides connect cysteine 26/cysteine 123 and cysteine 77/cysteine 129.

This sequence belongs to the IL-10 family. In terms of assembly, homodimer. Interacts with IL10RA and IL10RB. Expressed predominantly in bursa of Fabricius and cecal tonsils with low levels in thymus, liver and lung.

The protein localises to the secreted. In terms of biological role, major immune regulatory cytokine that acts on many cells of the immune system where it has profound anti-inflammatory functions, limiting excessive tissue disruption caused by inflammation. Mechanistically, IL10 binds to its heterotetrameric receptor comprising IL10RA and IL10RB leading to JAK1 and STAT2-mediated phosphorylation of STAT3. In turn, STAT3 translocates to the nucleus where it drives expression of anti-inflammatory mediators. Targets antigen-presenting cells (APCs) such as macrophages and monocytes and inhibits their release of pro-inflammatory cytokines including granulocyte-macrophage colony-stimulating factor /GM-CSF, granulocyte colony-stimulating factor/G-CSF, IL-1 alpha, IL-1 beta, IL-6, IL-8 and TNF-alpha. Also interferes with antigen presentation by reducing the expression of MHC-class II and co-stimulatory molecules, thereby inhibiting their ability to induce T cell activation. In addition, controls the inflammatory response of macrophages by reprogramming essential metabolic pathways including mTOR signaling. The chain is Interleukin-10 from Gallus gallus (Chicken).